A 468-amino-acid polypeptide reads, in one-letter code: IQ domain-containing protein C (468 aa).

In terms of domain architecture, IQ spans 6–35; sequence LVLKVTALQACIRGFLVRRQFQSLRGEYEA. 3 disordered regions span residues 113–157, 202–245, and 329–468; these read NASS…GPGL, EVNQ…PGEP, and SHKE…GPAG. Residues 139–150 are compositionally biased toward basic and acidic residues; the sequence is QETRDVSRKNDP. Basic and acidic residues predominate over residues 415-426; sequence SSIERSPSESSH.

This chain is IQ domain-containing protein C (IQCC), found in Bos taurus (Bovine).